Consider the following 89-residue polypeptide: Small ribosomal subunit protein uS15 (89 aa).

Belongs to the universal ribosomal protein uS15 family. As to quaternary structure, part of the 30S ribosomal subunit. Forms a bridge to the 50S subunit in the 70S ribosome, contacting the 23S rRNA.

One of the primary rRNA binding proteins, it binds directly to 16S rRNA where it helps nucleate assembly of the platform of the 30S subunit by binding and bridging several RNA helices of the 16S rRNA. Its function is as follows. Forms an intersubunit bridge (bridge B4) with the 23S rRNA of the 50S subunit in the ribosome. The polypeptide is Small ribosomal subunit protein uS15 (Corynebacterium glutamicum (strain R)).